A 302-amino-acid chain; its full sequence is Dehydrodolichyl diphosphate synthase 3 (302 aa).

It belongs to the UPP synthase family. Mg(2+) serves as cofactor.

It functions in the pathway protein modification; protein glycosylation. Functionally, catalyzes cis-prenyl chain elongation to produce the polyprenyl backbone of dolichol, a glycosyl carrier-lipid required for the biosynthesis of several classes of glycoprotein. This is Dehydrodolichyl diphosphate synthase 3 from Arabidopsis thaliana (Mouse-ear cress).